A 273-amino-acid chain; its full sequence is Dermonecrotic toxin LamSicTox-alphaIC1 (273 aa).

His5 is an active-site residue. Mg(2+)-binding residues include Glu25 and Asp27. Residue His41 is the Nucleophile of the active site. 2 disulfides stabilise this stretch: Cys45/Cys51 and Cys47/Cys190. Residue Asp85 participates in Mg(2+) binding.

It belongs to the arthropod phospholipase D family. Class II subfamily. Mg(2+) is required as a cofactor. Expressed by the venom gland.

Its subcellular location is the secreted. It carries out the reaction an N-(acyl)-sphingosylphosphocholine = an N-(acyl)-sphingosyl-1,3-cyclic phosphate + choline. The enzyme catalyses an N-(acyl)-sphingosylphosphoethanolamine = an N-(acyl)-sphingosyl-1,3-cyclic phosphate + ethanolamine. It catalyses the reaction a 1-acyl-sn-glycero-3-phosphocholine = a 1-acyl-sn-glycero-2,3-cyclic phosphate + choline. The catalysed reaction is a 1-acyl-sn-glycero-3-phosphoethanolamine = a 1-acyl-sn-glycero-2,3-cyclic phosphate + ethanolamine. Its function is as follows. Dermonecrotic toxins cleave the phosphodiester linkage between the phosphate and headgroup of certain phospholipids (sphingolipid and lysolipid substrates), forming an alcohol (often choline) and a cyclic phosphate. This toxin acts on sphingomyelin (SM). It may also act on ceramide phosphoethanolamine (CPE), lysophosphatidylcholine (LPC) and lysophosphatidylethanolamine (LPE), but not on lysophosphatidylserine (LPS), and lysophosphatidylglycerol (LPG). It acts by transphosphatidylation, releasing exclusively cyclic phosphate products as second products. Induces dermonecrosis, hemolysis, increased vascular permeability, edema, inflammatory response, and platelet aggregation. The protein is Dermonecrotic toxin LamSicTox-alphaIC1 of Loxosceles amazonica (Recluse spider).